Consider the following 220-residue polypeptide: Putative glutathione S-transferase C460.02c (220 aa).

In terms of domain architecture, GST N-terminal spans 1–81 (MFLGTIYSFK…YFYEKGKHND (81 aa)). The 128-residue stretch at 89 to 216 (NEIEEAEMLK…YPLELPLTVT (128 aa)) folds into the GST C-terminal domain.

It belongs to the GST superfamily.

The protein resides in the cytoplasm. The catalysed reaction is RX + glutathione = an S-substituted glutathione + a halide anion + H(+). Functionally, involved in the oxidative stress response and detoxification. This Schizosaccharomyces pombe (strain 972 / ATCC 24843) (Fission yeast) protein is Putative glutathione S-transferase C460.02c.